We begin with the raw amino-acid sequence, 199 residues long: dTTP/UTP pyrophosphatase (199 aa).

The Proton acceptor role is filled by Asp76.

Belongs to the Maf family. YhdE subfamily. Requires a divalent metal cation as cofactor.

Its subcellular location is the cytoplasm. It carries out the reaction dTTP + H2O = dTMP + diphosphate + H(+). It catalyses the reaction UTP + H2O = UMP + diphosphate + H(+). Its function is as follows. Nucleoside triphosphate pyrophosphatase that hydrolyzes dTTP and UTP. May have a dual role in cell division arrest and in preventing the incorporation of modified nucleotides into cellular nucleic acids. This chain is dTTP/UTP pyrophosphatase, found in Chlorobaculum parvum (strain DSM 263 / NCIMB 8327) (Chlorobium vibrioforme subsp. thiosulfatophilum).